Here is a 506-residue protein sequence, read N- to C-terminus: Lysine--tRNA ligase (506 aa).

Residues Glu-416 and Glu-423 each contribute to the Mg(2+) site.

This sequence belongs to the class-II aminoacyl-tRNA synthetase family. In terms of assembly, homodimer. The cofactor is Mg(2+).

Its subcellular location is the cytoplasm. The enzyme catalyses tRNA(Lys) + L-lysine + ATP = L-lysyl-tRNA(Lys) + AMP + diphosphate. The protein is Lysine--tRNA ligase of Xylella fastidiosa (strain M12).